The following is a 406-amino-acid chain: DNA repair protein RAD55 (406 aa).

Position 43-50 (43-50) interacts with ATP; that stretch reads GPPGIGKT. A disordered region spans residues 385 to 406; the sequence is DSNDNPLPNAEGKEEIIYDSEG.

The protein belongs to the RecA family. RAD55 subfamily.

The protein resides in the nucleus. Functionally, required for radiation resistance and meiotic viability and presumably acts in recombination and recombinational DNA repair pathways. This is DNA repair protein RAD55 (RAD55) from Saccharomyces cerevisiae (strain ATCC 204508 / S288c) (Baker's yeast).